A 400-amino-acid polypeptide reads, in one-letter code: 3-hydroxykynurenine transaminase (400 aa).

Residues 43–44 are binds to and confers specificity for 3-hydroxykynurenine; shared with dimeric partner; that stretch reads SN. Residues 77-79, Ser-154, and Gln-204 contribute to the pyridoxal 5'-phosphate site; that span reads SAH. Position 154 (Ser-154) interacts with substrate. Lys-205 is subject to N6-(pyridoxal phosphate)lysine. Residues Tyr-256 and Thr-259 each coordinate pyridoxal 5'-phosphate. Arg-356 contacts substrate.

Belongs to the class-V pyridoxal-phosphate-dependent aminotransferase family. As to quaternary structure, homodimer. May form homotetramer. Requires pyridoxal 5'-phosphate as cofactor.

The protein resides in the peroxisome. The catalysed reaction is glyoxylate + L-alanine = glycine + pyruvate. The enzyme catalyses L-kynurenine + glyoxylate = kynurenate + glycine + H2O. It catalyses the reaction 3-hydroxy-L-kynurenine + glyoxylate = xanthurenate + glycine + H2O. It carries out the reaction 3-hydroxy-L-kynurenine + pyruvate = xanthurenate + L-alanine + H2O. The catalysed reaction is L-kynurenine + pyruvate = kynurenate + L-alanine + H2O. The enzyme catalyses 2-oxobutanoate + L-alanine = (2S)-2-aminobutanoate + pyruvate. It catalyses the reaction L-phenylalanine + pyruvate = 3-phenylpyruvate + L-alanine. It carries out the reaction L-serine + pyruvate = 3-hydroxypyruvate + L-alanine. The catalysed reaction is L-cysteine + pyruvate = 2-oxo-3-sulfanylpropanoate + L-alanine. The enzyme catalyses 3-hydroxy-L-kynurenine + oxaloacetate = 4-(2-amino-3-hydroxyphenyl)-2,4-dioxobutanoate + L-aspartate. It catalyses the reaction 3-hydroxy-L-kynurenine + 3-phenylpyruvate = 4-(2-amino-3-hydroxyphenyl)-2,4-dioxobutanoate + L-phenylalanine. It carries out the reaction L-kynurenine + oxaloacetate = 4-(2-aminophenyl)-2,4-dioxobutanoate + L-aspartate. The catalysed reaction is 3-phenylpyruvate + L-kynurenine = 4-(2-aminophenyl)-2,4-dioxobutanoate + L-phenylalanine. It functions in the pathway amino-acid degradation; L-kynurenine degradation; kynurenate from L-kynurenine: step 1/2. Functionally, catalyzes the pyridoxal 5'-phosphate-dependent transamination of both 3-hydroxykynurenine and L-kynurenine to xanthurenic acid and kynurenic acid, respectively, preferentially using the alpha-ketoacid pyruvate, glyoxylate or oxaloacetate as the amino group acceptor. The affinity and catalytic efficiency for 3-hydroxykynurenine is higher than for L-kynurenine. Involved in the detoxification of cytotoxic metabolite 3-hydroxykynurenine generated by the hydroxylation of L-kynurenine, an intermediate in the tryptophan catabolism pathway. Also catalyzes, although with a lesser efficiency, the transamination of alanine with glyoxylate as an amino group acceptor. May play a role in the detoxification of glyoxylate, a toxic plant metabolite from the diet. The polypeptide is 3-hydroxykynurenine transaminase (Aedes aegypti (Yellowfever mosquito)).